A 156-amino-acid chain; its full sequence is Photosystem I reaction center subunit XI (156 aa).

2 helical membrane-spanning segments follow: residues 75-95 (GGLL…SLYA) and 128-148 (FFIG…ALYF).

It belongs to the PsaL family.

It is found in the cellular thylakoid membrane. This chain is Photosystem I reaction center subunit XI, found in Crocosphaera subtropica (strain ATCC 51142 / BH68) (Cyanothece sp. (strain ATCC 51142)).